Here is a 69-residue protein sequence, read N- to C-terminus: Large ribosomal subunit protein bL31 (69 aa).

Zn(2+) contacts are provided by cysteine 16, cysteine 18, cysteine 38, and cysteine 41.

It belongs to the bacterial ribosomal protein bL31 family. Type A subfamily. As to quaternary structure, part of the 50S ribosomal subunit. Requires Zn(2+) as cofactor.

In terms of biological role, binds the 23S rRNA. This is Large ribosomal subunit protein bL31 from Cutibacterium acnes (strain DSM 16379 / KPA171202) (Propionibacterium acnes).